Here is a 778-residue protein sequence, read N- to C-terminus: Tubulin polyglutamylase ttll6 (778 aa).

The interval 1-43 (MGTPAERSVSEVCRCEPDPGLEGEGWGSDTHAEPSNTPIPLPV) is disordered. A TTL domain is found at 51–393 (KKKLWINLTN…LGACDRRKIT (343 aa)). ATP-binding positions include lysine 168, 174–175 (QG), 196–199 (QVYM), and 209–211 (KFD). Glutamine 174 lines the a protein pocket. Arginine 235 lines the L-glutamate pocket. 257-258 (TN) serves as a coordination point for ATP. L-glutamate-binding residues include tyrosine 259 and lysine 277. Residues aspartate 340, glutamate 353, and asparagine 355 each coordinate Mg(2+). Histidine 356 provides a ligand contact to a protein. Residues 365–445 (RLDREVKDSL…MGGFRRIFPR (81 aa)) form a c-MTBD region region. L-glutamate is bound at residue lysine 371. Composition is skewed to basic and acidic residues over residues 402 to 418 (ERLQ…EEPR), 485 to 510 (KQEQ…GEKV), 533 to 542 (SVREETPVSL), and 760 to 778 (LSHD…EHSL). 3 disordered regions span residues 402 to 422 (ERLQ…QSQA), 485 to 542 (KQEQ…PVSL), and 758 to 778 (PHLS…EHSL).

Belongs to the tubulin--tyrosine ligase family. It depends on Mg(2+) as a cofactor.

The protein localises to the cytoplasm. Its subcellular location is the cytoskeleton. It localises to the cilium axoneme. It is found in the cilium basal body. It catalyses the reaction L-glutamyl-[protein] + L-glutamate + ATP = gamma-L-glutamyl-L-glutamyl-[protein] + ADP + phosphate + H(+). The catalysed reaction is (L-glutamyl)(n)-gamma-L-glutamyl-L-glutamyl-[protein] + L-glutamate + ATP = (L-glutamyl)(n+1)-gamma-L-glutamyl-L-glutamyl-[protein] + ADP + phosphate + H(+). Its function is as follows. Polyglutamylase which modifies both tubulin and non-tubulin proteins, generating alpha-linked polyglutamate side chains on the gamma-carboxyl group of specific glutamate residues of target proteins. Preferentially mediates ATP-dependent long polyglutamate chain elongation over the initiation step of the polyglutamylation reaction. Preferentially modifies the alpha-tubulin tail over a beta-tail. Mediates microtubule polyglutamylation in cilia axoneme, which is important for ciliary structural formation and motility. Polyglutamylates olfactory cilia, necessary for the regulation of ciliary structure and beating. In Danio rerio (Zebrafish), this protein is Tubulin polyglutamylase ttll6.